We begin with the raw amino-acid sequence, 311 residues long: Terpentetriene synthase (311 aa).

The DDXXD motif signature appears at 77–81; that stretch reads DDRWD.

The protein belongs to the terpene synthase family. In terms of assembly, homodimer. Mg(2+) is required as a cofactor.

It carries out the reaction terpentedienyl diphosphate = terpentetriene + diphosphate. The protein operates within antibiotic biosynthesis. In terms of biological role, involved in the production of the isoprenoid antibiotic terpentecin. Converts terpentedienol diphosphate (TDP) into terpentetriene (TTE). Can also accept geranylgeranyl diphosphate (GGDP) and farnesyl diphosphate (FDP) as substrates. In Kitasatospora griseola (Streptomyces griseolosporeus), this protein is Terpentetriene synthase (cyc2).